Reading from the N-terminus, the 84-residue chain is ATP synthase subunit c (84 aa).

2 consecutive transmembrane segments (helical) span residues 13–33 (IAVG…WGLI) and 56–76 (FIFA…GFWF).

It belongs to the ATPase C chain family. F-type ATPases have 2 components, F(1) - the catalytic core - and F(0) - the membrane proton channel. F(1) has five subunits: alpha(3), beta(3), gamma(1), delta(1), epsilon(1). F(0) has three main subunits: a(1), b(2) and c(10-14). The alpha and beta chains form an alternating ring which encloses part of the gamma chain. F(1) is attached to F(0) by a central stalk formed by the gamma and epsilon chains, while a peripheral stalk is formed by the delta and b chains.

It localises to the cell inner membrane. F(1)F(0) ATP synthase produces ATP from ADP in the presence of a proton or sodium gradient. F-type ATPases consist of two structural domains, F(1) containing the extramembraneous catalytic core and F(0) containing the membrane proton channel, linked together by a central stalk and a peripheral stalk. During catalysis, ATP synthesis in the catalytic domain of F(1) is coupled via a rotary mechanism of the central stalk subunits to proton translocation. Its function is as follows. Key component of the F(0) channel; it plays a direct role in translocation across the membrane. A homomeric c-ring of between 10-14 subunits forms the central stalk rotor element with the F(1) delta and epsilon subunits. In Acidithiobacillus ferrooxidans (strain ATCC 23270 / DSM 14882 / CIP 104768 / NCIMB 8455) (Ferrobacillus ferrooxidans (strain ATCC 23270)), this protein is ATP synthase subunit c.